The following is a 171-amino-acid chain: Protein GrpE (171 aa).

Positions 1 to 22 are disordered; sequence MNHEHPDIESQQSAADAAAAAG.

This sequence belongs to the GrpE family. As to quaternary structure, homodimer.

It localises to the cytoplasm. Participates actively in the response to hyperosmotic and heat shock by preventing the aggregation of stress-denatured proteins, in association with DnaK and GrpE. It is the nucleotide exchange factor for DnaK and may function as a thermosensor. Unfolded proteins bind initially to DnaJ; upon interaction with the DnaJ-bound protein, DnaK hydrolyzes its bound ATP, resulting in the formation of a stable complex. GrpE releases ADP from DnaK; ATP binding to DnaK triggers the release of the substrate protein, thus completing the reaction cycle. Several rounds of ATP-dependent interactions between DnaJ, DnaK and GrpE are required for fully efficient folding. The polypeptide is Protein GrpE (Stenotrophomonas maltophilia (strain R551-3)).